A 117-amino-acid polypeptide reads, in one-letter code: MDKKASRIRRATRARRKIAELGATRLVVHRTPRHVYAQVIAANGSEVIAAASTVEKAIREQVKYTGNVDAAKAVGKAVAERALEKGVTAVAFDRSGFQYHGRVAALAESAREAGLKF.

Belongs to the universal ribosomal protein uL18 family. Part of the 50S ribosomal subunit; part of the 5S rRNA/L5/L18/L25 subcomplex. Contacts the 5S and 23S rRNAs.

In terms of biological role, this is one of the proteins that bind and probably mediate the attachment of the 5S RNA into the large ribosomal subunit, where it forms part of the central protuberance. The protein is Large ribosomal subunit protein uL18 of Vibrio campbellii (strain ATCC BAA-1116).